Reading from the N-terminus, the 484-residue chain is Ubiquinone biosynthesis monooxygenase COQ6, mitochondrial (484 aa).

The transit peptide at 1–41 (MLSLAKAKLAVVGIGRQCVAVRTLNGARAVHRSFSSSEHDQ) directs the protein to the mitochondrion.

Belongs to the UbiH/COQ6 family. As to quaternary structure, component of a multi-subunit COQ enzyme complex, composed of at least coq3, coq4, coq5, coq6, coq7 and coq9. Interacts with coq8b and coq7. FAD serves as cofactor.

The protein resides in the mitochondrion inner membrane. Its subcellular location is the golgi apparatus. It localises to the cell projection. The enzyme catalyses a 4-hydroxy-3-(all-trans-polyprenyl)benzoate + 2 reduced [2Fe-2S]-[ferredoxin] + O2 + 2 H(+) = a 3,4-dihydroxy-5-(all-trans-polyprenyl)benzoate + 2 oxidized [2Fe-2S]-[ferredoxin] + H2O. The catalysed reaction is a 2-methoxy-6-(all-trans-polyprenyl)phenol + 2 reduced [2Fe-2S]-[ferredoxin] + O2 + 2 H(+) = a 2-methoxy-6-(all-trans-polyprenyl)benzene-1,4-diol + 2 oxidized [2Fe-2S]-[ferredoxin] + H2O. It functions in the pathway cofactor biosynthesis; ubiquinone biosynthesis. Functionally, FAD-dependent monooxygenase required for two non-consecutive steps during ubiquinone biosynthesis. Required for the C5-ring hydroxylation during ubiquinone biosynthesis by catalyzing the hydroxylation of 4-hydroxy-3-(all-trans-polyprenyl)benzoic acid to 3,4-dihydroxy-5-(all-trans-polyprenyl)benzoic acid. Also acts downstream of coq4, for the C1-hydroxylation during ubiquinone biosynthesis by catalyzing the hydroxylation of 2-methoxy-6-(all-trans-polyprenyl)phenol to 2-methoxy-6-(all-trans-polyprenyl)benzene-1,4-diol. The electrons required for the hydroxylation reaction are funneled indirectly to coq6 from NADPH via a ferredoxin/ferredoxin reductase system. In Danio rerio (Zebrafish), this protein is Ubiquinone biosynthesis monooxygenase COQ6, mitochondrial.